The chain runs to 475 residues: ATP synthase subunit beta (475 aa).

152–159 (GGAGVGKT) contributes to the ATP binding site.

The protein belongs to the ATPase alpha/beta chains family. As to quaternary structure, F-type ATPases have 2 components, CF(1) - the catalytic core - and CF(0) - the membrane proton channel. CF(1) has five subunits: alpha(3), beta(3), gamma(1), delta(1), epsilon(1). CF(0) has three main subunits: a(1), b(2) and c(9-12). The alpha and beta chains form an alternating ring which encloses part of the gamma chain. CF(1) is attached to CF(0) by a central stalk formed by the gamma and epsilon chains, while a peripheral stalk is formed by the delta and b chains.

Its subcellular location is the cell inner membrane. It carries out the reaction ATP + H2O + 4 H(+)(in) = ADP + phosphate + 5 H(+)(out). Its function is as follows. Produces ATP from ADP in the presence of a proton gradient across the membrane. The catalytic sites are hosted primarily by the beta subunits. This Wolbachia sp. subsp. Drosophila simulans (strain wRi) protein is ATP synthase subunit beta.